A 366-amino-acid polypeptide reads, in one-letter code: Beta sliding clamp (366 aa).

It belongs to the beta sliding clamp family. Forms a ring-shaped head-to-tail homodimer around DNA which binds and tethers DNA polymerases and other proteins to the DNA. The DNA replisome complex has a single clamp-loading complex (3 tau and 1 each of delta, delta', psi and chi subunits) which binds 3 Pol III cores (1 core on the leading strand and 2 on the lagging strand) each with a beta sliding clamp dimer. Additional proteins in the replisome are other copies of gamma, psi and chi, Ssb, DNA helicase and RNA primase.

It is found in the cytoplasm. Functionally, confers DNA tethering and processivity to DNA polymerases and other proteins. Acts as a clamp, forming a ring around DNA (a reaction catalyzed by the clamp-loading complex) which diffuses in an ATP-independent manner freely and bidirectionally along dsDNA. Initially characterized for its ability to contact the catalytic subunit of DNA polymerase III (Pol III), a complex, multichain enzyme responsible for most of the replicative synthesis in bacteria; Pol III exhibits 3'-5' exonuclease proofreading activity. The beta chain is required for initiation of replication as well as for processivity of DNA replication. In Chlamydia pneumoniae (Chlamydophila pneumoniae), this protein is Beta sliding clamp (dnaN).